A 491-amino-acid polypeptide reads, in one-letter code: Sterol 14-alpha demethylase (491 aa).

The chain crosses the membrane as a helical span at residues 20-40; that stretch reads LWMLSTVALLSILVVSVVINV. Cys430 contacts heme.

The protein belongs to the cytochrome P450 family. It depends on heme as a cofactor.

It localises to the endoplasmic reticulum membrane. It catalyses the reaction a 14alpha-methyl steroid + 3 reduced [NADPH--hemoprotein reductase] + 3 O2 = a Delta(14) steroid + formate + 3 oxidized [NADPH--hemoprotein reductase] + 4 H2O + 4 H(+). It carries out the reaction a 14alpha-methyl steroid + reduced [NADPH--hemoprotein reductase] + O2 = a 14alpha-hydroxymethyl steroid + oxidized [NADPH--hemoprotein reductase] + H2O + H(+). The enzyme catalyses a 14alpha-hydroxymethyl steroid + reduced [NADPH--hemoprotein reductase] + O2 = a 14alpha-formyl steroid + oxidized [NADPH--hemoprotein reductase] + 2 H2O + H(+). The catalysed reaction is a 14alpha-formyl steroid + reduced [NADPH--hemoprotein reductase] + O2 = a Delta(14) steroid + formate + oxidized [NADPH--hemoprotein reductase] + H2O + 2 H(+). It catalyses the reaction lanosterol + 3 reduced [NADPH--hemoprotein reductase] + 3 O2 = 4,4-dimethyl-5alpha-cholesta-8,14,24-trien-3beta-ol + formate + 3 oxidized [NADPH--hemoprotein reductase] + 4 H2O + 4 H(+). It carries out the reaction lanosterol + reduced [NADPH--hemoprotein reductase] + O2 = 32-hydroxylanosterol + oxidized [NADPH--hemoprotein reductase] + H2O + H(+). The enzyme catalyses 32-hydroxylanosterol + reduced [NADPH--hemoprotein reductase] + O2 = 32-oxolanosterol + oxidized [NADPH--hemoprotein reductase] + 2 H2O + H(+). The catalysed reaction is 32-oxolanosterol + reduced [NADPH--hemoprotein reductase] + O2 = 4,4-dimethyl-5alpha-cholesta-8,14,24-trien-3beta-ol + formate + oxidized [NADPH--hemoprotein reductase] + H2O + 2 H(+). It catalyses the reaction eburicol + 3 reduced [NADPH--hemoprotein reductase] + 3 O2 = 14-demethyleburicol + formate + 3 oxidized [NADPH--hemoprotein reductase] + 4 H2O + 4 H(+). It carries out the reaction eburicol + reduced [NADPH--hemoprotein reductase] + O2 = 32-hydroxyeburicol + oxidized [NADPH--hemoprotein reductase] + H2O + H(+). The enzyme catalyses 32-hydroxyeburicol + reduced [NADPH--hemoprotein reductase] + O2 = 32-oxoeburicol + oxidized [NADPH--hemoprotein reductase] + 2 H2O + H(+). The catalysed reaction is 32-oxoeburicol + reduced [NADPH--hemoprotein reductase] + O2 = 14-demethyleburicol + formate + oxidized [NADPH--hemoprotein reductase] + H2O + 2 H(+). It functions in the pathway steroid biosynthesis; sterol biosynthesis. Functionally, sterol 14alpha-demethylase, encoded by cyp51A, cyp51B and cyp51C, that plays a critical role in the third module of ergosterol biosynthesis pathway, being ergosterol the major sterol component in fungal membranes that participates in a variety of functions. The third module or late pathway involves the ergosterol synthesis itself through consecutive reactions that mainly occur in the endoplasmic reticulum (ER) membrane. In filamentous fungi, during the initial step of this module, lanosterol (lanosta-8,24-dien-3beta-ol) can be metabolized to eburicol. Sterol 14alpha-demethylase catalyzes the three-step oxidative removal of the 14alpha-methyl group (C-32) of both these sterols in the form of formate, and converts eburicol and lanosterol to 14-demethyleburicol (4,4,24-trimethylergosta-8,14,24(28)-trienol) and 4,4-dimethyl-5alpha-cholesta-8,14,24-trien-3beta-ol, respectively, which are further metabolized by other enzymes in the pathway to ergosterol. Can also use substrates not intrinsic to fungi, such as 24,25-dihydrolanosterol (DHL), producing 4,4'-dimethyl-8,14-cholestadien-3-beta-ol, but at lower rates than the endogenous substrates. As a target of azole drugs, plays a crucial role in azole susceptibility. This chain is Sterol 14-alpha demethylase, found in Aspergillus flavus (strain ATCC 200026 / FGSC A1120 / IAM 13836 / NRRL 3357 / JCM 12722 / SRRC 167).